The following is a 284-amino-acid chain: tRNA uridine(34) hydroxylase (284 aa).

The region spanning 132–226 (AGRPVVMLDT…YFEEVGGAHY (95 aa)) is the Rhodanese domain. The Cysteine persulfide intermediate role is filled by Cys186.

It belongs to the TrhO family.

The catalysed reaction is uridine(34) in tRNA + AH2 + O2 = 5-hydroxyuridine(34) in tRNA + A + H2O. Catalyzes oxygen-dependent 5-hydroxyuridine (ho5U) modification at position 34 in tRNAs. This Burkholderia cenocepacia (strain HI2424) protein is tRNA uridine(34) hydroxylase.